We begin with the raw amino-acid sequence, 184 residues long: NEDD8-conjugating enzyme UBC12 (184 aa).

Positions 29–174 (PSLIRLKKDL…VNHSLRGNNI (146 aa)) constitute a UBC core domain. Residue Cys112 is the Glycyl thioester intermediate of the active site.

This sequence belongs to the ubiquitin-conjugating enzyme family. UBC12 subfamily.

The catalysed reaction is [E1 NEDD8-activating enzyme]-S-[NEDD8 protein]-yl-L-cysteine + [E2 NEDD8-conjugating enzyme]-L-cysteine = [E1 NEDD8-activating enzyme]-L-cysteine + [E2 NEDD8-conjugating enzyme]-S-[NEDD8-protein]-yl-L-cysteine.. It participates in protein modification; protein neddylation. Accepts the ubiquitin-like protein NEDD8/RUB1 from the UBA3-ULA1 E1 complex and catalyzes its covalent attachment to other proteins. This is NEDD8-conjugating enzyme UBC12 (UBC12) from Kluyveromyces lactis (strain ATCC 8585 / CBS 2359 / DSM 70799 / NBRC 1267 / NRRL Y-1140 / WM37) (Yeast).